A 774-amino-acid polypeptide reads, in one-letter code: Penicillin acylase 2 proenzyme (774 aa).

Residue Ser240 is the Nucleophile of the active site.

It belongs to the peptidase S45 family. Heterodimer of a small subunit and a large subunit processed from the same precursor.

The catalysed reaction is a penicillin + H2O = 6-aminopenicillanate + a carboxylate. This Pseudomonas sp. (strain SE83) protein is Penicillin acylase 2 proenzyme (acyII).